The following is a 388-amino-acid chain: Transposase for insertion sequence element IS406 (388 aa).

It belongs to the transposase mutator family.

Its function is as follows. Required for the transposition of the insertion element. The polypeptide is Transposase for insertion sequence element IS406 (Burkholderia multivorans (strain ATCC 17616 / 249)).